A 493-amino-acid polypeptide reads, in one-letter code: 1-aminocyclopropane-1-carboxylate synthase CMW33 (493 aa).

K279 carries the post-translational modification N6-(pyridoxal phosphate)lysine.

This sequence belongs to the class-I pyridoxal-phosphate-dependent aminotransferase family. In terms of assembly, homodimer. Pyridoxal 5'-phosphate is required as a cofactor.

It carries out the reaction S-adenosyl-L-methionine = 1-aminocyclopropane-1-carboxylate + S-methyl-5'-thioadenosine + H(+). Its pathway is alkene biosynthesis; ethylene biosynthesis via S-adenosyl-L-methionine; ethylene from S-adenosyl-L-methionine: step 1/2. Functionally, catalyzes the formation of 1-aminocyclopropane-1-carboxylate, a direct precursor of ethylene in higher plants. This is 1-aminocyclopropane-1-carboxylate synthase CMW33 (ACS1) from Cucurbita maxima (Pumpkin).